Here is a 185-residue protein sequence, read N- to C-terminus: Ribosome-recycling factor (185 aa).

Belongs to the RRF family.

Its subcellular location is the cytoplasm. Responsible for the release of ribosomes from messenger RNA at the termination of protein biosynthesis. May increase the efficiency of translation by recycling ribosomes from one round of translation to another. The protein is Ribosome-recycling factor of Xanthomonas euvesicatoria pv. vesicatoria (strain 85-10) (Xanthomonas campestris pv. vesicatoria).